We begin with the raw amino-acid sequence, 177 residues long: Endoribonuclease YbeY (177 aa).

Residues H114, H118, and H124 each coordinate Zn(2+). Positions 154–177 (SYPEAIPTNPAPRRQASSSAGHIE) are disordered. A compositionally biased stretch (polar residues) spans 168 to 177 (QASSSAGHIE).

It belongs to the endoribonuclease YbeY family. The cofactor is Zn(2+).

The protein resides in the cytoplasm. Functionally, single strand-specific metallo-endoribonuclease involved in late-stage 70S ribosome quality control and in maturation of the 3' terminus of the 16S rRNA. This Cellvibrio japonicus (strain Ueda107) (Pseudomonas fluorescens subsp. cellulosa) protein is Endoribonuclease YbeY.